Consider the following 445-residue polypeptide: Tubulin beta-2 chain (445 aa).

8 residues coordinate GTP: glutamine 12, glutamate 73, serine 142, glycine 146, threonine 147, glycine 148, asparagine 208, and asparagine 230. Glutamate 73 is a binding site for Mg(2+).

It belongs to the tubulin family. Dimer of alpha and beta chains. A typical microtubule is a hollow water-filled tube with an outer diameter of 25 nm and an inner diameter of 15 nM. Alpha-beta heterodimers associate head-to-tail to form protofilaments running lengthwise along the microtubule wall with the beta-tubulin subunit facing the microtubule plus end conferring a structural polarity. Microtubules usually have 13 protofilaments but different protofilament numbers can be found in some organisms and specialized cells. Requires Mg(2+) as cofactor.

Its subcellular location is the cytoplasm. It is found in the cytoskeleton. Its function is as follows. Tubulin is the major constituent of microtubules, a cylinder consisting of laterally associated linear protofilaments composed of alpha- and beta-tubulin heterodimers. Microtubules grow by the addition of GTP-tubulin dimers to the microtubule end, where a stabilizing cap forms. Below the cap, tubulin dimers are in GDP-bound state, owing to GTPase activity of alpha-tubulin. This Suillus bovinus (Jersey cow bolete) protein is Tubulin beta-2 chain (TUBB2).